Consider the following 381-residue polypeptide: Dual-specificity RNA methyltransferase RlmN (381 aa).

E95 functions as the Proton acceptor in the catalytic mechanism. Residues E101 to D347 enclose the Radical SAM core domain. The cysteines at positions 108 and 352 are disulfide-linked. Residues C115, C119, and C122 each coordinate [4Fe-4S] cluster. Residues G178–E179, S210, S232–H234, and N309 each bind S-adenosyl-L-methionine. C352 functions as the S-methylcysteine intermediate in the catalytic mechanism.

This sequence belongs to the radical SAM superfamily. RlmN family. It depends on [4Fe-4S] cluster as a cofactor.

The protein localises to the cytoplasm. It carries out the reaction adenosine(2503) in 23S rRNA + 2 reduced [2Fe-2S]-[ferredoxin] + 2 S-adenosyl-L-methionine = 2-methyladenosine(2503) in 23S rRNA + 5'-deoxyadenosine + L-methionine + 2 oxidized [2Fe-2S]-[ferredoxin] + S-adenosyl-L-homocysteine. The enzyme catalyses adenosine(37) in tRNA + 2 reduced [2Fe-2S]-[ferredoxin] + 2 S-adenosyl-L-methionine = 2-methyladenosine(37) in tRNA + 5'-deoxyadenosine + L-methionine + 2 oxidized [2Fe-2S]-[ferredoxin] + S-adenosyl-L-homocysteine. Specifically methylates position 2 of adenine 2503 in 23S rRNA and position 2 of adenine 37 in tRNAs. m2A2503 modification seems to play a crucial role in the proofreading step occurring at the peptidyl transferase center and thus would serve to optimize ribosomal fidelity. This chain is Dual-specificity RNA methyltransferase RlmN, found in Bordetella petrii (strain ATCC BAA-461 / DSM 12804 / CCUG 43448).